Reading from the N-terminus, the 224-residue chain is ATP phosphoribosyltransferase (224 aa).

This sequence belongs to the ATP phosphoribosyltransferase family. Short subfamily. In terms of assembly, heteromultimer composed of HisG and HisZ subunits.

It is found in the cytoplasm. The enzyme catalyses 1-(5-phospho-beta-D-ribosyl)-ATP + diphosphate = 5-phospho-alpha-D-ribose 1-diphosphate + ATP. It participates in amino-acid biosynthesis; L-histidine biosynthesis; L-histidine from 5-phospho-alpha-D-ribose 1-diphosphate: step 1/9. Catalyzes the condensation of ATP and 5-phosphoribose 1-diphosphate to form N'-(5'-phosphoribosyl)-ATP (PR-ATP). Has a crucial role in the pathway because the rate of histidine biosynthesis seems to be controlled primarily by regulation of HisG enzymatic activity. This is ATP phosphoribosyltransferase from Cupriavidus taiwanensis (strain DSM 17343 / BCRC 17206 / CCUG 44338 / CIP 107171 / LMG 19424 / R1) (Ralstonia taiwanensis (strain LMG 19424)).